The sequence spans 243 residues: DNA repair protein RecO (243 aa).

Belongs to the RecO family.

Its function is as follows. Involved in DNA repair and RecF pathway recombination. The chain is DNA repair protein RecO from Thermobifida fusca (strain YX).